The sequence spans 718 residues: MQMGMAVLVLVIACGVLSVLFAIWAIRSVLAADQGTQRMQEIAEAIREGASAYLTRQYSTIAIVGIVVFLLAWYLLSLNAAMGFLIGAVLSGVTGFIGMHVSVRANVRTAQAASLSLAGGLELAFKSGAITGLLVAGLALLGVSVYYFVLTVWLGYAPADRTVIDSLVSLGFGASLISIFARLGGGIFTKGADVGGDLVGKVEAGIPEDDPRNPATIADNVGDNVGDCAGMAADLFETYAVTVVATMVLGAIFFHGSDALTNVMLYPLMICGACVITSIAGTFFVKLGVNGSIMGALYKGLIATGLLSIVGLGVANTLTVGWGEIGTVAGKSITGTNLFVCGLIGLIVTGLIVVITEYYTGTNKRPVNSIAQASVTGHGTNVIQGLAVSLESTALPAIVIVGGIISTYQLAGLFGTAIAVTAMLGIAGMIVALDAFGPVTDNAGGIAEMAGLDPEVRKATDALDAVGNTTKAVTKGYAIGSAGLGALVLFAAYSNDLAYFAANGQIYPYFADMGPVSFDLSNPYVVAGLIFGGLIPYLFGGMAMTAVGRAGGAVVQEVRRQFREKPGIMTGKERPDYARAVDLLTKAAIREMIIPSLLPVLAPIVVYFGVLLISGSKAAAFAALGASLLGVIINGLFVAISMTSGGGAWDNAKKSFEDGFTDADGVKHMKGSEAHKASVTGDTVGDPYKDTAGPAVNPAIKITNIVALLLLAVLAHMA.

Helical transmembrane passes span 6 to 26 (AVLVLVIACGVLSVLFAIWAI), 61 to 81 (IAIVGIVVFLLAWYLLSLNAA), 83 to 103 (GFLIGAVLSGVTGFIGMHVSV), 112 to 132 (AASLSLAGGLELAFKSGAITG), 133 to 153 (LLVAGLALLGVSVYYFVLTVW), and 168 to 188 (VSLGFGASLISIFARLGGGIF). Substrate is bound at residue Lys-190. Residues Asp-193, Asp-197, Asn-220, and Asp-223 each coordinate Mg(2+). The next 6 membrane-spanning stretches (helical) occupy residues 235–255 (LFETYAVTVVATMVLGAIFFH), 265–285 (LYPLMICGACVITSIAGTFFV), 300–320 (GLIATGLLSIVGLGVANTLTV), 335–355 (GTNLFVCGLIGLIVTGLIVVI), 385–405 (GLAVSLESTALPAIVIVGGII), and 413–433 (LFGTAIAVTAMLGIAGMIVAL). Residue Asp-441 coordinates Mg(2+). A run of 4 helical transmembrane segments spans residues 472 to 492 (AVTKGYAIGSAGLGALVLFAA), 524 to 544 (YVVAGLIFGGLIPYLFGGMAM), 593 to 613 (IIPSLLPVLAPIVVYFGVLLI), and 620 to 640 (AFAALGASLLGVIINGLFVAI). The Ca(2+) site is built by Asp-650, Asp-682, and Asp-686. Lys-689 contributes to the substrate binding site. Residues 695–715 (AVNPAIKITNIVALLLLAVLA) form a helical membrane-spanning segment.

The protein belongs to the H(+)-translocating pyrophosphatase (TC 3.A.10) family. K(+)-insensitive subfamily. In terms of assembly, homodimer. It depends on Mg(2+) as a cofactor.

Its subcellular location is the cell inner membrane. It carries out the reaction diphosphate + H2O + H(+)(in) = 2 phosphate + 2 H(+)(out). Proton pump that utilizes the energy of pyrophosphate hydrolysis as the driving force for proton movement across the membrane. Generates a proton motive force. The sequence is that of K(+)-insensitive pyrophosphate-energized proton pump from Brucella melitensis biotype 1 (strain ATCC 23456 / CCUG 17765 / NCTC 10094 / 16M).